The sequence spans 501 residues: Suppressor of hairless protein homolog (501 aa).

DNA-binding regions lie at residues 58–68, 166–171, and 193–198; these read QKSYGNEKRFF, SKPSKK, and RLRSQT. One can recognise an IPT/TIG domain in the interval 356–446; it reads PVVESLQLNG…YSTSLTFTYT (91 aa).

This sequence belongs to the Su(H) family. In terms of assembly, interacts with activated Notch proteins. Forms a ternary complex with nrarp and the intracellular domain (NICD) of notch1. Interacts with rita1, leading to nuclear export, prevent the interaction between rbpj and NICD product and subsequent down-regulation of the Notch signaling pathway.

The protein resides in the nucleus. Its subcellular location is the cytoplasm. Functionally, transcriptional regulator that plays a central role in Notch signaling, a signaling pathway involved in cell-cell communication that regulates a broad spectrum of cell-fate determinations. Acts as a transcriptional repressor when it is not associated with Notch proteins. When associated with some NICD product of Notch proteins (Notch intracellular domain), it acts as a transcriptional activator that activates transcription of Notch target genes. Required for the transcriptional activation of ESR1, suggesting that it is required during primary neurogenesis in embryos. Binds to the oxygen responsive element of COX4I2 and activates its transcription under hypoxia conditions (4% oxygen). The polypeptide is Suppressor of hairless protein homolog (rbpj) (Xenopus laevis (African clawed frog)).